The sequence spans 947 residues: Protein NETWORKED 2A (947 aa).

An NAB domain is found at 10 to 90; that stretch reads YSWWWASHIR…ERYDHLSREL (81 aa). Residues 105–131 form a disordered region; it reads VQFPLEDDSDENEDYDGRPRKPPKHLH. Over residues 109–118 the composition is skewed to acidic residues; sequence LEDDSDENED. Coiled coils occupy residues 348 to 454 and 568 to 619; these read KLAE…IQDV and VLRD…QKLD. Basic and acidic residues-rich tracts occupy residues 618 to 627 and 635 to 644; these read LDTTGKDSPH and LEHEQGHHET. Disordered regions lie at residues 618-675, 743-763, and 911-947; these read LDTT…RTKS, RIESKQQQESPRSSSNTAVAS, and KNRQQKQSASSLFSCVSPSPGLHKQSSYSRPPGKLPE. Over residues 645-660 the composition is skewed to polar residues; sequence VSISPTSNFSVATTPH. Basic and acidic residues predominate over residues 662–675; sequence QVGDVKRTPGRTKS. Residues 722-809 are a coiled coil; it reads VHQIQKYQTT…LANIQEEIAR (88 aa). 2 stretches are compositionally biased toward polar residues: residues 749–761 and 915–927; these read QQESPRSSSNTAV and QKQSASSLFSCVS.

It belongs to the NET family. Expressed specifically in pollen.

The protein localises to the cell membrane. Functionally, plant-specific actin binding protein. Associates with F-actin at the plasma membrane in growing pollen tubes. May be part of a membrane-cytoskeletal adapter complex. This Arabidopsis thaliana (Mouse-ear cress) protein is Protein NETWORKED 2A.